Consider the following 313-residue polypeptide: 4-hydroxy-3-methylbut-2-enyl diphosphate reductase (313 aa).

A [4Fe-4S] cluster-binding site is contributed by C12. H41 and H74 together coordinate (2E)-4-hydroxy-3-methylbut-2-enyl diphosphate. The dimethylallyl diphosphate site is built by H41 and H74. Positions 41 and 74 each coordinate isopentenyl diphosphate. C96 contacts [4Fe-4S] cluster. H124 contributes to the (2E)-4-hydroxy-3-methylbut-2-enyl diphosphate binding site. H124 is a binding site for dimethylallyl diphosphate. H124 provides a ligand contact to isopentenyl diphosphate. The active-site Proton donor is the E126. T164 is a binding site for (2E)-4-hydroxy-3-methylbut-2-enyl diphosphate. C194 contacts [4Fe-4S] cluster. (2E)-4-hydroxy-3-methylbut-2-enyl diphosphate-binding residues include S222, S223, N224, and S266. The dimethylallyl diphosphate site is built by S222, S223, N224, and S266. Isopentenyl diphosphate is bound by residues S222, S223, N224, and S266.

The protein belongs to the IspH family. It depends on [4Fe-4S] cluster as a cofactor.

It catalyses the reaction isopentenyl diphosphate + 2 oxidized [2Fe-2S]-[ferredoxin] + H2O = (2E)-4-hydroxy-3-methylbut-2-enyl diphosphate + 2 reduced [2Fe-2S]-[ferredoxin] + 2 H(+). It carries out the reaction dimethylallyl diphosphate + 2 oxidized [2Fe-2S]-[ferredoxin] + H2O = (2E)-4-hydroxy-3-methylbut-2-enyl diphosphate + 2 reduced [2Fe-2S]-[ferredoxin] + 2 H(+). The protein operates within isoprenoid biosynthesis; dimethylallyl diphosphate biosynthesis; dimethylallyl diphosphate from (2E)-4-hydroxy-3-methylbutenyl diphosphate: step 1/1. Its pathway is isoprenoid biosynthesis; isopentenyl diphosphate biosynthesis via DXP pathway; isopentenyl diphosphate from 1-deoxy-D-xylulose 5-phosphate: step 6/6. Its function is as follows. Catalyzes the conversion of 1-hydroxy-2-methyl-2-(E)-butenyl 4-diphosphate (HMBPP) into a mixture of isopentenyl diphosphate (IPP) and dimethylallyl diphosphate (DMAPP). Acts in the terminal step of the DOXP/MEP pathway for isoprenoid precursor biosynthesis. The chain is 4-hydroxy-3-methylbut-2-enyl diphosphate reductase from Burkholderia pseudomallei (strain 1026b).